A 29-amino-acid polypeptide reads, in one-letter code: Serum amyloid P-component (29 aa).

Residues 6–29 enclose the Pentraxin (PTX) domain; the sequence is LGKVFVFSKESNVDDVKLLTPQTE.

It belongs to the pentraxin family. As to quaternary structure, homopentamer. Pentraxin (or pentaxin) have a discoid arrangement of 5 non-covalently bound subunits. It depends on Ca(2+) as a cofactor.

It localises to the secreted. In Hippoglossus hippoglossus (Atlantic halibut), this protein is Serum amyloid P-component.